A 417-amino-acid polypeptide reads, in one-letter code: MIKHYDVVIAGGGVIGASCAYQLSKRKDLKVALIDAKRPGNASRASAGGLWAIGESVGLGCGVIFFRMMSANRKREAQGSAVVVDSSTPHILPQSFFDFALQSNELYPRLHRELMGLHNMDFKFEQTGLKFVIYDEEDRLYAEHIVGCIPHLSDQVRWLDQAALRASEPNVSHEAQGALEFLCDHQVNPFRLTDAYTEGARQNGVDVYFNTNVTGVLHQGNRVSGVKTDVAGLFRCTTLINAAGAWAAELSLQATGIEIPVKPVKGQILLTERMPKLLNGCLTTSDCYMAQKDNGEILIGSTTEDKGFDVTTTYPEINGLVQGAVRCVPELAHVNLKRCWAGLRPGSPDELPILGPMDGVEGYLNACGHFRTGILTSAITGVLLDKLVNEEALPLDITPFLARRFATAPVKKQPEPA.

Positions 1 to 18 (MIKHYDVVIAGGGVIGAS) are cleaved as a signal peptide. 7 to 21 (VVIAGGGVIGASCAY) contributes to the FAD binding site. Cys19 carries N-palmitoyl cysteine lipidation. Cys19 is lipidated: S-diacylglycerol cysteine. Residues 46 to 66 (SAGGLWAIGESVGLGCGVIFF) traverse the membrane as a helical segment.

Belongs to the FAD-dependent glycerol-3-phosphate dehydrogenase family. Heterotrimer of HcnA, HcnB and HcnC.

The protein localises to the cell membrane. The catalysed reaction is glycine + 2 A = hydrogen cyanide + 2 AH2 + CO2. A three-component membrane-bound flavoenzyme that catalyzes the formation of hydrogen cyanide, a secondary metabolite, by transfer of electrons to a cyanide-resistant branch of the aerobic respiratory chain. Contributes to suppression of black root rot of tobacco. This is Hydrogen cyanide synthase subunit HcnC from Pseudomonas protegens (strain DSM 19095 / LMG 27888 / CFBP 6595 / CHA0).